The sequence spans 180 residues: ATP-dependent protease subunit HslV (180 aa).

Residue T2 is part of the active site. Residues G157, C160, and S163 each coordinate Na(+).

It belongs to the peptidase T1B family. HslV subfamily. In terms of assembly, a double ring-shaped homohexamer of HslV is capped on each side by a ring-shaped HslU homohexamer. The assembly of the HslU/HslV complex is dependent on binding of ATP.

Its subcellular location is the cytoplasm. It catalyses the reaction ATP-dependent cleavage of peptide bonds with broad specificity.. Its activity is regulated as follows. Allosterically activated by HslU binding. Protease subunit of a proteasome-like degradation complex believed to be a general protein degrading machinery. The chain is ATP-dependent protease subunit HslV from Wigglesworthia glossinidia brevipalpis.